Here is a 291-residue protein sequence, read N- to C-terminus: Lactoylglutathione lyase (291 aa).

VOC domains follow at residues 24-149 and 155-283; these read RLLH…LIQR and PLCQ…LVDN. Positions 31, 82, and 96 each coordinate substrate. The active site involves histidine 96. Glutamate 145 serves as the catalytic Proton donor/acceptor. Glutamate 145 lines the Ni(2+) pocket. Catalysis depends on residues glutamine 158 and glutamate 209. Residue glutamate 209 participates in Ni(2+) binding.

This sequence belongs to the glyoxalase I family. In terms of assembly, monomer. Ni(2+) serves as cofactor. In terms of processing, phosphorylated after gibberellin treatment. Expressed in callus, stem, leaves, panicles and maturing seeds (at protein level).

The catalysed reaction is (R)-S-lactoylglutathione = methylglyoxal + glutathione. It participates in secondary metabolite metabolism; methylglyoxal degradation; (R)-lactate from methylglyoxal: step 1/2. Functionally, catalyzes the conversion of hemimercaptal, formed from methylglyoxal and glutathione, to S-lactoylglutathione. Involved in the detoxifiation of methylglyoxal. Can functionally complement growth defect of a yeast mutant lacking GLY I. Involved in abiotic stress response. Over-expression of GLYI-11 in tobacco increases tolerance to osmotic, oxidative and salt stresses. This chain is Lactoylglutathione lyase, found in Oryza sativa subsp. japonica (Rice).